Here is a 375-residue protein sequence, read N- to C-terminus: Filamin-binding LIM protein 1 (375 aa).

Residues 1–70 (MASKPEKRVA…SPWTPPGRAA (70 aa)) form a filamin-binding region. Disordered stretches follow at residues 43-119 (WEAP…PSEE) and 137-176 (HLSPPLPPPPPQAPAERPSVQPSPLRPMEEELPPPPAERV). 2 stretches are compositionally biased toward pro residues: residues 104 to 114 (FPPPPPPPPVL) and 140 to 149 (PPLPPPPPQA). The span at 150 to 159 (PAERPSVQPS) shows a compositional bias: low complexity. LIM zinc-binding domains lie at 183–244 (DICA…TLER), 245–302 (CGKC…RKFA), and 303–372 (PVCS…RSAA). The interval 278-375 (IGDESFALGS…HVKRSAAGCC (98 aa)) is FERMT2-binding.

Interacts with FERMT2, FLNA, FLNB and FLNC. Interacts with NKX2-5.

Its subcellular location is the cell junction. It localises to the focal adhesion. The protein localises to the cytoplasm. It is found in the cytoskeleton. The protein resides in the stress fiber. In terms of biological role, serves as an anchoring site for cell-ECM adhesion proteins and filamin-containing actin filaments. Is implicated in cell shape modulation (spreading) and motility. May participate in the regulation of filamin-mediated cross-linking and stabilization of actin filaments. May also regulate the assembly of filamin-containing signaling complexes that control actin assembly. Promotes dissociation of FLNA from ITGB3 and ITGB7. Promotes activation of integrins and regulates integrin-mediated cell-cell adhesion. The sequence is that of Filamin-binding LIM protein 1 (FBLIM1) from Pongo abelii (Sumatran orangutan).